We begin with the raw amino-acid sequence, 473 residues long: FAD-dependent oxidoreductase dpasF (473 aa).

The first 21 residues, 1–21, serve as a signal peptide directing secretion; the sequence is MNRLLASALLVGSAVVAPVSA. N-linked (GlcNAc...) asparagine glycans are attached at residues asparagine 26, asparagine 54, asparagine 92, asparagine 133, asparagine 185, asparagine 276, and asparagine 401.

This sequence belongs to the beta-cyclopiazonate dehydrogenase family. It depends on FAD as a cofactor.

The protein operates within secondary metabolite biosynthesis; terpenoid biosynthesis. Its function is as follows. FAD-dependent oxidoreductase; part of the gene cluster that mediates the biosynthesis of the diterpenoid pyrones subglutinols A and B. The first step of the pathway is the synthesis of the alpha-pyrone moiety by the polyketide synthase dpasA via condensation of one acetyl-CoA starter unit with 3 malonyl-CoA units and 2 methylations. The alpha-pyrone is then combined with geranylgeranyl pyrophosphate (GGPP) formed by the GGPP synthase dpasD through the action of the prenyltransferase dpasC to yield a linear alpha-pyrone diterpenoid. Subsequent steps in the diterpenoid pyrone biosynthetic pathway involve the decalin core formation, which is initiated by the epoxidation of the C10-C11 olefin by the FAD-dependent oxidoreductase dpasE, and is followed by a cyclization cascade catalyzed by the terpene cyclase dpasB. The FAD-linked oxidoreductase dpasF is then involved in tetrahydrofuran (THF) ring formation at the C5 unit to complete the formation of subglutinols A and B. DpasF possesses also an additional catalytic ability of multi-step oxidations to generate a new DDP analog with an enone system at the C5 named FDDP A. The sequence is that of FAD-dependent oxidoreductase dpasF from Apiospora sacchari (Arthrinium sacchari).